The sequence spans 143 residues: Putative nickel-responsive regulator (143 aa).

The Ni(2+) site is built by His82, His97, His99, and Cys105.

Belongs to the transcriptional regulatory CopG/NikR family. Ni(2+) is required as a cofactor.

In terms of biological role, transcriptional regulator. This Helicobacter hepaticus (strain ATCC 51449 / 3B1) protein is Putative nickel-responsive regulator.